The following is a 219-amino-acid chain: Probable nicotinate-nucleotide adenylyltransferase (219 aa).

This sequence belongs to the NadD family.

The enzyme catalyses nicotinate beta-D-ribonucleotide + ATP + H(+) = deamido-NAD(+) + diphosphate. Its pathway is cofactor biosynthesis; NAD(+) biosynthesis; deamido-NAD(+) from nicotinate D-ribonucleotide: step 1/1. Its function is as follows. Catalyzes the reversible adenylation of nicotinate mononucleotide (NaMN) to nicotinic acid adenine dinucleotide (NaAD). This chain is Probable nicotinate-nucleotide adenylyltransferase, found in Herminiimonas arsenicoxydans.